A 210-amino-acid polypeptide reads, in one-letter code: MSTKVPIYLKRGSRKGKKEKLRDLLSSDMISPPLGDFRHTIHIGSGGGNDTFGDISFLQGKFHLLPGTAVDETQEDSGFEMPFQFTRTATLCGRELPDGPSPLLKNAISLPVIGGPQALTLPAAQAPPKPPRLHLETPQASPQEAGTVDVWRIPEAGAAHSELTTESGAEEPFLSHASSLLSLHVDLGPSILDDVLQIMDQDLGHLQIPT.

Serine 2 bears the N-acetylserine mark. The CRIB domain maps to 30-44 (ISPPLGDFRHTIHIG). Serine 31, serine 101, and serine 141 each carry phosphoserine. The segment at 124–145 (AQAPPKPPRLHLETPQASPQEA) is disordered.

It belongs to the BORG/CEP family. As to quaternary structure, interacts with CDC42 and RHOQ, in a GTP-dependent manner, and with SEPT7.

It is found in the endomembrane system. Its subcellular location is the cytoplasm. It localises to the cytoskeleton. Its function is as follows. Probably involved in the organization of the actin cytoskeleton. May act downstream of CDC42 to induce actin filament assembly leading to cell shape changes. Induces pseudopodia formation in fibroblasts in a CDC42-dependent manner. The protein is Cdc42 effector protein 2 (CDC42EP2) of Bos taurus (Bovine).